Here is a 611-residue protein sequence, read N- to C-terminus: DNA mismatch repair protein MutL (611 aa).

The tract at residues 353-387 (NRQAAGGNHFATPAPAAAPRPASTASSSWQRQEPV) is disordered. Residues 363-380 (ATPAPAAAPRPASTASSS) are compositionally biased toward low complexity.

This sequence belongs to the DNA mismatch repair MutL/HexB family.

In terms of biological role, this protein is involved in the repair of mismatches in DNA. It is required for dam-dependent methyl-directed DNA mismatch repair. May act as a 'molecular matchmaker', a protein that promotes the formation of a stable complex between two or more DNA-binding proteins in an ATP-dependent manner without itself being part of a final effector complex. This is DNA mismatch repair protein MutL from Erwinia tasmaniensis (strain DSM 17950 / CFBP 7177 / CIP 109463 / NCPPB 4357 / Et1/99).